The following is a 122-amino-acid chain: Conotoxin flf14.2 (122 aa).

A signal peptide spans 1–22 (MGFRVLVLIVMVTTSALPFTFS). Residues 23–96 (EESGRSPFRP…AESPVGQKRW (74 aa)) constitute a propeptide that is removed on maturation. Positions 53–91 (RADGQPSDMRQPEMRRPEMRRPEVRRPEVRQPEFAESPV) are disordered. Residues 62–85 (RQPEMRRPEMRRPEVRRPEVRQPE) are compositionally biased toward basic and acidic residues. Cystine bridges form between Cys-101-Cys-121 and Cys-105-Cys-117.

This sequence belongs to the conotoxin R superfamily. Expressed by the venom duct.

It is found in the secreted. This is Conotoxin flf14.2 from Conus anabathrum floridanus (Florida cone).